The sequence spans 319 residues: Putative olfactory receptor 52L2 (319 aa).

The Extracellular portion of the chain corresponds to 1–43 (MNLDSFFSFLLKSLIMALSNSSWRLPQPSFFLVGIPGLEESQH). N-linked (GlcNAc...) asparagine glycosylation occurs at asparagine 20. The chain crosses the membrane as a helical span at residues 44-64 (WIALPLGILYLLALVGNVTIL). The Cytoplasmic segment spans residues 65–72 (FIIWMDPS). A helical membrane pass occupies residues 73–93 (LHQSMYLFLSMLAAIDLVVAS). Topologically, residues 94–117 (STAPKALAVLLVRAQEIGYTVCLI) are extracellular. An intrachain disulfide couples cysteine 115 to cysteine 207. A helical transmembrane segment spans residues 118-138 (QMFFTHAFSSMESGVLVAMAL). The Cytoplasmic portion of the chain corresponds to 139-157 (DRYVAICHPLHHSTILHPG). A helical membrane pass occupies residues 158–178 (VIGHIGMVVLVRGLLLLIPFL). Residues 179–214 (ILLRKLIFCQATIIGHAYCEHMAVVKLACSETTVNR) are Extracellular-facing. A helical transmembrane segment spans residues 215 to 235 (AYGLTVALLVVGLDVLAIGVS). Topologically, residues 236–255 (YAHILQAVLKVPGNEARLKA) are cytoplasmic. Residues 256-276 (FSTCGSHVCVILVFYIPGMFS) traverse the membrane as a helical segment. The Extracellular portion of the chain corresponds to 277-291 (FLTHRFGHHVPHHVH). A helical transmembrane segment spans residues 292–312 (VLLAILYRLVPPALNPLVYRV). Over 313-319 (KTQKIHQ) the chain is Cytoplasmic.

It belongs to the G-protein coupled receptor 1 family.

Its subcellular location is the cell membrane. Its function is as follows. Odorant receptor. The protein is Putative olfactory receptor 52L2 (OR52L2P) of Homo sapiens (Human).